A 118-amino-acid chain; its full sequence is NADH-ubiquinone oxidoreductase chain 3 (118 aa).

A run of 3 helical transmembrane segments spans residues 6 to 26, 62 to 82, and 87 to 107; these read IFVY…VSFL, LVSI…PWAV, and IGLF…IGFV.

The protein belongs to the complex I subunit 3 family.

The protein resides in the mitochondrion membrane. The catalysed reaction is a ubiquinone + NADH + 5 H(+)(in) = a ubiquinol + NAD(+) + 4 H(+)(out). Functionally, core subunit of the mitochondrial membrane respiratory chain NADH dehydrogenase (Complex I) that is believed to belong to the minimal assembly required for catalysis. Complex I functions in the transfer of electrons from NADH to the respiratory chain. The immediate electron acceptor for the enzyme is believed to be ubiquinone. The chain is NADH-ubiquinone oxidoreductase chain 3 (ND3) from Marchantia polymorpha (Common liverwort).